A 272-amino-acid chain; its full sequence is Exosome complex component Rrp42 (272 aa).

The protein belongs to the RNase PH family. Rrp42 subfamily. In terms of assembly, component of the archaeal exosome complex. Forms a hexameric ring-like arrangement composed of 3 Rrp41-Rrp42 heterodimers. The hexameric ring associates with a trimer of Rrp4 and/or Csl4 subunits.

The protein resides in the cytoplasm. In terms of biological role, non-catalytic component of the exosome, which is a complex involved in RNA degradation. Contributes to the structuring of the Rrp41 active site. The chain is Exosome complex component Rrp42 from Thermococcus kodakarensis (strain ATCC BAA-918 / JCM 12380 / KOD1) (Pyrococcus kodakaraensis (strain KOD1)).